A 190-amino-acid polypeptide reads, in one-letter code: MELILGSQSSARANLLKEHGIEFEQKALYFDEESLKTTDPREFVYLACKGKLEKAKELLANNRTIVVADSVVSVGNRMQRKAKNRQEAFEFLKRQNGHEIEVLTCSALISPALEWLDLSVFRARLKAFDPSEMEKYLESGLWQESAGCVRLEDFHKPYIKSLSENLSVGLGLNVEGLLGVLKLGAKLSSL.

Asp-69 acts as the Proton acceptor in catalysis.

It belongs to the Maf family. The cofactor is a divalent metal cation.

The protein resides in the cytoplasm. It catalyses the reaction a ribonucleoside 5'-triphosphate + H2O = a ribonucleoside 5'-phosphate + diphosphate + H(+). The catalysed reaction is a 2'-deoxyribonucleoside 5'-triphosphate + H2O = a 2'-deoxyribonucleoside 5'-phosphate + diphosphate + H(+). Nucleoside triphosphate pyrophosphatase. May have a dual role in cell division arrest and in preventing the incorporation of modified nucleotides into cellular nucleic acids. The sequence is that of Nucleoside triphosphate pyrophosphatase from Helicobacter pylori (strain Shi470).